Consider the following 666-residue polypeptide: Pantothenate kinase 1 (666 aa).

This sequence belongs to the type II pantothenate kinase family.

It carries out the reaction (R)-pantothenate + ATP = (R)-4'-phosphopantothenate + ADP + H(+). Its pathway is cofactor biosynthesis; coenzyme A biosynthesis; CoA from (R)-pantothenate: step 1/5. Regulated by feedback inhibition by malonyl-CoA. Functionally, catalyzes the phosphorylation of pantothenate the first step in CoA biosynthesis. May play a role in the physiological regulation of the intracellular CoA concentration. The protein is Pantothenate kinase 1 of Oryza sativa subsp. japonica (Rice).